A 214-amino-acid polypeptide reads, in one-letter code: Probable chemoreceptor glutamine deamidase CheD (214 aa).

Belongs to the CheD family.

It carries out the reaction L-glutaminyl-[protein] + H2O = L-glutamyl-[protein] + NH4(+). In terms of biological role, probably deamidates glutamine residues to glutamate on methyl-accepting chemotaxis receptors (MCPs), playing an important role in chemotaxis. This Vibrio vulnificus (strain YJ016) protein is Probable chemoreceptor glutamine deamidase CheD.